The sequence spans 382 residues: Putative glutamate--cysteine ligase 2-1 (382 aa).

The protein belongs to the glutamate--cysteine ligase type 2 family. YbdK subfamily.

It catalyses the reaction L-cysteine + L-glutamate + ATP = gamma-L-glutamyl-L-cysteine + ADP + phosphate + H(+). Functionally, ATP-dependent carboxylate-amine ligase which exhibits weak glutamate--cysteine ligase activity. This Frankia alni (strain DSM 45986 / CECT 9034 / ACN14a) protein is Putative glutamate--cysteine ligase 2-1.